A 294-amino-acid polypeptide reads, in one-letter code: Bifunctional protein FolD (294 aa).

Residues 166 to 168 (GRS), S191, and I232 each bind NADP(+).

The protein belongs to the tetrahydrofolate dehydrogenase/cyclohydrolase family. In terms of assembly, homodimer.

The enzyme catalyses (6R)-5,10-methylene-5,6,7,8-tetrahydrofolate + NADP(+) = (6R)-5,10-methenyltetrahydrofolate + NADPH. It carries out the reaction (6R)-5,10-methenyltetrahydrofolate + H2O = (6R)-10-formyltetrahydrofolate + H(+). The protein operates within one-carbon metabolism; tetrahydrofolate interconversion. Its function is as follows. Catalyzes the oxidation of 5,10-methylenetetrahydrofolate to 5,10-methenyltetrahydrofolate and then the hydrolysis of 5,10-methenyltetrahydrofolate to 10-formyltetrahydrofolate. The polypeptide is Bifunctional protein FolD (Nitrobacter hamburgensis (strain DSM 10229 / NCIMB 13809 / X14)).